Here is a 536-residue protein sequence, read N- to C-terminus: Probable pectinesterase/pectinesterase inhibitor 59 (536 aa).

Residues 1–30 form the signal peptide; sequence MNMMMQKLSILFLHLILLVLLCVHPLTTVA. A pectinesterase inhibitor 59 region spans residues 31-183; the sequence is DRNSTDWCDK…SHLISNCLAV (153 aa). N-linked (GlcNAc...) asparagine glycans are attached at residues asparagine 33, asparagine 91, asparagine 116, asparagine 159, and asparagine 195. The pectinesterase 59 stretch occupies residues 221–522; the sequence is NLVVAKDGSG…FTVGKFIAGT (302 aa). Residues threonine 298 and glutamine 328 each contribute to the substrate site. Aspartate 351 (proton donor; for pectinesterase activity) is an active-site residue. A disulfide bond links cysteine 365 and cysteine 385. Catalysis depends on aspartate 372, which acts as the Nucleophile; for pectinesterase activity. Substrate is bound by residues arginine 440 and tryptophan 442.

It in the N-terminal section; belongs to the PMEI family. This sequence in the C-terminal section; belongs to the pectinesterase family. In terms of tissue distribution, expressed in siliques.

The protein resides in the secreted. The protein localises to the cell wall. The enzyme catalyses [(1-&gt;4)-alpha-D-galacturonosyl methyl ester](n) + n H2O = [(1-&gt;4)-alpha-D-galacturonosyl](n) + n methanol + n H(+). It functions in the pathway glycan metabolism; pectin degradation; 2-dehydro-3-deoxy-D-gluconate from pectin: step 1/5. Its function is as follows. Acts in the modification of cell walls via demethylesterification of cell wall pectin. The sequence is that of Probable pectinesterase/pectinesterase inhibitor 59 (PME59) from Arabidopsis thaliana (Mouse-ear cress).